The chain runs to 197 residues: Dephospho-CoA kinase (197 aa).

The DPCK domain maps to 2-197 (IIGITGGIAS…SALLSLANPR (196 aa)). Position 10-15 (10-15 (ASGKST)) interacts with ATP.

It belongs to the CoaE family.

It localises to the cytoplasm. The enzyme catalyses 3'-dephospho-CoA + ATP = ADP + CoA + H(+). Its pathway is cofactor biosynthesis; coenzyme A biosynthesis; CoA from (R)-pantothenate: step 5/5. Catalyzes the phosphorylation of the 3'-hydroxyl group of dephosphocoenzyme A to form coenzyme A. The chain is Dephospho-CoA kinase from Streptococcus pyogenes serotype M28 (strain MGAS6180).